Consider the following 906-residue polypeptide: Centromere protein C (906 aa).

Composition is skewed to polar residues over residues 56 to 74 and 87 to 96; these read SLTSSTQKKKANYSQSSSK and SSRTGEASLQ. Disordered stretches follow at residues 56–115 and 141–169; these read SLTS…NEVH and QKAASPAGQKRVASVSRSPVDRQASNKNI. 2 positions are modified to phosphoserine: serine 71 and serine 94. Over residues 97–108 the composition is skewed to low complexity; that stretch reads ASAEPSEAAGGS. Glycyl lysine isopeptide (Lys-Gly) (interchain with G-Cter in SUMO2) cross-links involve residues lysine 150 and lysine 182. The disordered stretch occupies residues 197–224; that stretch reads VEDNLSKGQEGTSSEITQKRDDLSSDVQ. Residues 202 to 212 are compositionally biased toward polar residues; sequence SKGQEGTSSEI. Residues 228–242 carry the Nuclear localization signal motif; the sequence is KKNFSELFLETVKRK. Glycyl lysine isopeptide (Lys-Gly) (interchain with G-Cter in SUMO2) cross-links involve residues lysine 229, lysine 240, lysine 242, and lysine 266. Disordered stretches follow at residues 294-320, 341-596, and 623-671; these read RHLSAHKPSPENTALLQGKKSREKSHS, AQLS…SLAI, and EYTS…EQDQ. 4 positions are modified to phosphoserine: serine 302, serine 344, serine 363, and serine 404. Polar residues predominate over residues 402–424; the sequence is GQSSWENSNVSNTGQDKLQINSK. Basic and acidic residues predominate over residues 426–450; it reads NMKDCEEVRNEPNPKKQKPALENKK. The Nuclear localization signal signature appears at 449 to 466; that stretch reads KKKTNSTQTNKEKSGKKF. Positions 465–474 are enriched in low complexity; sequence KFFSGGSKNK. Over residues 481-494 the composition is skewed to polar residues; that stretch reads TLTSRRSCRISQRP. Serine 495 carries the phosphoserine modification. The segment covering 496-512 has biased composition (basic and acidic residues); the sequence is EWWRVKSDESSVDRNPS. Residue lysine 501 forms a Glycyl lysine isopeptide (Lys-Gly) (interchain with G-Cter in SUMO2) linkage. Serine 505 carries the phosphoserine modification. Over residues 523–546 the composition is skewed to basic residues; it reads NKKKQTKRNHVSKRAGKKPGSSKR. Positions 525–540 match the Nuclear localization signal motif; that stretch reads KKQTKRNHVSKRAGKK. The span at 626–637 shows a compositional bias: polar residues; that stretch reads SKTQMESASNSE. Lysine 640 is covalently cross-linked (Glycyl lysine isopeptide (Lys-Gly) (interchain with G-Cter in SUMO2)). 2 positions are modified to phosphoserine: serine 647 and serine 673. A Glycyl lysine isopeptide (Lys-Gly) (interchain with G-Cter in SUMO2) cross-link involves residue lysine 692. An MIF2 homology domain II region spans residues 702 to 724; it reads VRRSNRIRLKPLEYWRGERVDYQ. A phosphoserine mark is found at serine 728 and serine 737. Positions 744–762 match the Nuclear localization signal motif; that stretch reads KIKAQRNLGKVNKKVTKKP. Lysine 770 participates in a covalent cross-link: Glycyl lysine isopeptide (Lys-Gly) (interchain with G-Cter in SUMO2). The MIF2 homology domain III stretch occupies residues 853–906; the sequence is LVFYVNFGDLLCTLHETPYKLTTGDSFYVPSGNHYNIKNLLNVESSLLFTQIKR.

The protein belongs to the CENP-C/MIF2 family. In terms of assembly, oligomer. Component of the CENPA-NAC complex, at least composed of CENPA, CENPC, CENPH, CENPM, CENPN, CENPT and CENPU. The CENPA-NAC complex interacts with the CENPA-CAD complex, composed of CENPI, CENPK, CENPL, CENPO, CENPP, CENPQ, CENPR and CENPS. Binds to DAXX. Interacts with DNMT3B. Interacts directly with CENPA. Identified in a centromere complex containing histones H2A, H2B and H4, and at least CENPA, CENPB, CENPC, CENPT, CENPN, HJURP, SUPT16H, SSRP1 and RSF1. Interacts with MEIKIN.

Its subcellular location is the nucleus. It is found in the chromosome. The protein resides in the centromere. It localises to the kinetochore. Component of the CENPA-NAC (nucleosome-associated) complex, a complex that plays a central role in assembly of kinetochore proteins, mitotic progression and chromosome segregation. The CENPA-NAC complex recruits the CENPA-CAD (nucleosome distal) complex and may be involved in incorporation of newly synthesized CENPA into centromeres. CENPC recruits DNA methylation and DNMT3B to both centromeric and pericentromeric satellite repeats and regulates the histone code in these regions. The protein is Centromere protein C (Cenpc) of Mus musculus (Mouse).